A 1369-amino-acid polypeptide reads, in one-letter code: MutS protein homolog 5 (1369 aa).

Positions 138-190 (IYEDGTTEEGTSEDTVPTWDSSLAYSTDETTAEKEEKEEDEDDDDEGLPAKLN) are disordered. A compositionally biased stretch (acidic residues) spans 173–184 (EKEEDEDDDDEG). 639–646 (GPNACGKS) is a binding site for ATP. 4 disordered regions span residues 880-915 (SMRN…SVLS), 935-1135 (KKKK…RSSN), 1153-1182 (LKSQ…HSQN), and 1248-1278 (NFIF…SSIS). Over residues 884 to 894 (VSEEIEKERSE) the composition is skewed to basic and acidic residues. 2 stretches are compositionally biased toward polar residues: residues 895–915 (ASTP…SVLS) and 941–950 (TGSSMESSMS). Positions 954-967 (FQEEDEGTEGEEDQ) are enriched in acidic residues. A compositionally biased stretch (polar residues) spans 991–1003 (QSINSRHSFSTRT). The segment covering 1024 to 1037 (STSTSSPGPSASKS) has biased composition (low complexity). A compositionally biased stretch (polar residues) spans 1049 to 1065 (VKESQVLETPKQLSISS). Residues 1073-1084 (SSEKDVISRVSE) show a composition bias toward basic and acidic residues. Polar residues-rich tracts occupy residues 1111–1124 (KNRS…QSAR) and 1153–1167 (LKSQ…TPRS). The span at 1254-1263 (PEPRSSEKQR) shows a compositional bias: basic and acidic residues.

It belongs to the DNA mismatch repair MutS family. In terms of assembly, heterooligomer of him-14 and msh-5. Interacts with the brc-1-brd-1 heterodimer. Expressed in the germline.

It is found in the chromosome. In terms of biological role, crucial component in meiotic recombination, functioning at some point after the initiation step of recombination. Plays a role in promoting the crossover outcome of meiotic recombination events. Required for formation of normal meiotic crossover, and crossover and chiasmata generated by artificially made DNA breaks. Together with him-14 and zhp-3 plays a role in the activation of DNA damage-dependent apoptosis at the DNA damage checkpoint in pachytene cells. This Caenorhabditis elegans protein is MutS protein homolog 5.